Here is a 266-residue protein sequence, read N- to C-terminus: GTP cyclohydrolase III (266 aa).

The protein belongs to the archaeal-type GTP cyclohydrolase family.

It catalyses the reaction GTP + 3 H2O = 2-amino-5-formylamino-6-(5-phospho-D-ribosylamino)pyrimidin-4(3H)-one + 2 phosphate + 2 H(+). Functionally, catalyzes the formation of 2-amino-5-formylamino-6-ribofuranosylamino-4(3H)-pyrimidinone ribonucleotide monophosphate and inorganic phosphate from GTP. Also has an independent pyrophosphate phosphohydrolase activity. The sequence is that of GTP cyclohydrolase III from Methanococcus maripaludis (strain C7 / ATCC BAA-1331).